An 87-amino-acid polypeptide reads, in one-letter code: MPPNDRAEKQAAAQQAVNILHEISTILNCHLDRQTLSICISMIEKGINPEALANVVKELRKKGQENQLEAAAAAAASSSTTVPSRRR.

This sequence belongs to the MOZART1 family. As to quaternary structure, part of the gamma-tubulin complex.

Its subcellular location is the cytoplasm. It is found in the cytoskeleton. It localises to the microtubule organizing center. The protein resides in the spindle pole body. Functionally, required for gamma-tubulin complex recruitment to the microtubule organizing center (MTOC). This is Mitotic-spindle organizing protein 1 from Chaetomium globosum (strain ATCC 6205 / CBS 148.51 / DSM 1962 / NBRC 6347 / NRRL 1970) (Soil fungus).